Consider the following 413-residue polypeptide: Serine/threonine-protein phosphatase 7 (413 aa).

Cys-28 and Cys-67 form a disulfide bridge. Mn(2+)-binding residues include Asp-84, His-86, Asp-113, and Asn-145. Residue His-146 is the Proton donor of the active site. 2 residues coordinate Mn(2+): His-197 and His-303. The interval Asn-391–Ser-413 is disordered. The span at Met-404–Ser-413 shows a compositional bias: polar residues.

Belongs to the PPP phosphatase family. PP-7 subfamily. In terms of assembly, monomer, homodimer, and heteromer. Interacts with calmodulin (CaM3 and CaM4) and HSFA1A/HSF1. Mn(2+) serves as cofactor. As to expression, expressed in leaves, and, to a lower extent, in stems and flowers.

The protein resides in the nucleus. It is found in the nucleoplasm. The enzyme catalyses O-phospho-L-seryl-[protein] + H2O = L-seryl-[protein] + phosphate. It catalyses the reaction O-phospho-L-threonyl-[protein] + H2O = L-threonyl-[protein] + phosphate. Its activity is regulated as follows. Inhibited by NaF and orthovanadate, as well as by divalent cations such as Ni(2+) and Zn(2+). Inhibited by polylysine with myelin basic protein as substrate, but activated by polylysine with pNPP as substrate. Reversibly regulated by redox agents. Inhibited by submillimolar Pi concentrations. Slightly repressed by calmodulin (CaM). In terms of biological role, phosphatase active on para-nitrophenylphosphate (pNPP) and on various phosphoproteins such as myelin basic protein. Seems to act as a positive regulator of cryptochrome signaling involved in hypocotyl growth inhibition and cotyledon expansion under white and blue light conditions. Confers thermotolerance. Required for heat shock mediated-signaling pathway that leads to the expression of heat shock proteins (HSPs). The sequence is that of Serine/threonine-protein phosphatase 7 (PP7) from Arabidopsis thaliana (Mouse-ear cress).